A 131-amino-acid polypeptide reads, in one-letter code: Large ribosomal subunit protein bL17 (131 aa).

This sequence belongs to the bacterial ribosomal protein bL17 family. As to quaternary structure, part of the 50S ribosomal subunit. Contacts protein L32.

The polypeptide is Large ribosomal subunit protein bL17 (Paraburkholderia phymatum (strain DSM 17167 / CIP 108236 / LMG 21445 / STM815) (Burkholderia phymatum)).